The primary structure comprises 191 residues: Large ribosomal subunit protein eL6 (191 aa).

It belongs to the eukaryotic ribosomal protein eL6 family.

The chain is Large ribosomal subunit protein eL6 (RPL6) from Tetrahymena thermophila (strain SB210).